Consider the following 389-residue polypeptide: Type II methyltransferase M2.BsuMI (389 aa).

The SAM-dependent MTase C5-type domain occupies 1–299 (MKVVSLFSGI…ENLSQPKGSI (299 aa)). Residue cysteine 69 is part of the active site.

Belongs to the class I-like SAM-binding methyltransferase superfamily. C5-methyltransferase family. Monomer. May form a complex with YdiP, also seems to be active alone.

It catalyses the reaction a 2'-deoxycytidine in DNA + S-adenosyl-L-methionine = a 5-methyl-2'-deoxycytidine in DNA + S-adenosyl-L-homocysteine + H(+). Somewhat inhibited by MgCl(2) and spermidine, strongly inhibited by MnCl(2). Functionally, a methylase, recognizes the double-stranded sequence 5'-YTCGAR-3', methylates C-3 on both strands, and protects the DNA from cleavage by the BsuMI endonuclease. The chain is Type II methyltransferase M2.BsuMI (ydiP) from Bacillus subtilis (strain 168).